The following is a 413-amino-acid chain: Putative zinc finger protein B0310.2 (413 aa).

Disordered stretches follow at residues 130–151 (PIFSSDDSVKGMPSRKRAKRSL) and 259–290 (VESDEGEIEVSPSPSTGDITENESSSSSTGPM). A compositionally biased stretch (polar residues) spans 270 to 281 (PSPSTGDITENE). C2H2-type zinc fingers lie at residues 306–330 (FICMHNNCGKRFANKFLLKKHMFIH) and 336–358 (HTCPHCHKKFNRKDNLLRHKKTH).

The protein localises to the nucleus. The chain is Putative zinc finger protein B0310.2 from Caenorhabditis elegans.